The primary structure comprises 513 residues: Cytochrome P450 71D445 (513 aa).

Residues 12–28 form a helical; Signal-anchor for type II membrane protein membrane-spanning segment; it reads SEWAITSTITLLFLILL. Cys450 contacts heme.

This sequence belongs to the cytochrome P450 family. Heme serves as cofactor. Expressed in mature seeds.

It is found in the membrane. It carries out the reaction (-)-casbene + reduced [NADPH--hemoprotein reductase] + O2 = 8-hydroxycasbene + oxidized [NADPH--hemoprotein reductase] + H2O + H(+). The catalysed reaction is 4-hydroxycasbene + reduced [NADPH--hemoprotein reductase] + O2 = 4,8-dihydroxycasbene + oxidized [NADPH--hemoprotein reductase] + H2O + H(+). It catalyses the reaction 4,8-dihydroxycasbene + reduced [NADPH--hemoprotein reductase] + O2 = 4,5,8-trihydroxycasbene + oxidized [NADPH--hemoprotein reductase] + H2O + H(+). The protein operates within secondary metabolite biosynthesis; terpenoid biosynthesis. Involved in the biosynthesis of macrocyclic lathyrane type diterpenoids (also called Euphorbia factors) natural products, including the cyclization route from casbene to jolkinol C, a precursor for ingenol mebutate that is used to treat actinic keratosis, a precancerous skin condition. Catalyzes the hydroxylation of (-)-casbene and 4-hydroxycasbene to produce 8-hydroxycasbene and 4,8-dihydroxycasbene, respectively. Also mediates the formation of 4-hydroxy-8-ketocasbene from 4,8-dihydroxycasbene. Together with ADH1, triggers the biosynthesis of 8-ketocasbene from 8-hydroxycasbene. The chain is Cytochrome P450 71D445 from Euphorbia lathyris (Caper spurge).